A 322-amino-acid chain; its full sequence is MEHVVYVVGHKNPDTDSVCSAIAFAYLWNKWKEGGNVAKMMKIEAEAKPVIQGDVNPETKYVLEKFGFEVPEIMTNGEGKKVALVDHSEKAQTVDGIDKAEVVAIVDHHKIGDVTTPQPILFVNLPVGCTATVIKLLFDKTGVEIPKDIAGILLSSILSDTVIFKSATTTELDKEVAEELAKIAGIDDLTKFGVEIKAKLSAVDDLTAMDIIKRDYKDFDMSGKKVGVGQIELVDLSLIESRIDEIYEAMKKMKEEGGYAGIFLMLTDIMKEGTELLVVTDYPEVVEKAFGKKLEGKSVWLDGVMSRKKQVVPPLEKAFAEL.

Residues His-10, Asp-14, Asp-16, Asp-86, His-108, and Asp-160 each contribute to the Mn(2+) site.

The protein belongs to the PPase class C family. The cofactor is Mn(2+).

The protein resides in the cytoplasm. It carries out the reaction diphosphate + H2O = 2 phosphate + H(+). This is Probable manganese-dependent inorganic pyrophosphatase (ppaC) from Archaeoglobus fulgidus (strain ATCC 49558 / DSM 4304 / JCM 9628 / NBRC 100126 / VC-16).